A 633-amino-acid polypeptide reads, in one-letter code: Glutathione S-transferase C-terminal domain-containing protein (633 aa).

Positions 130–332 (LGFKKTCLKA…QEVPGVKTAA (203 aa)) constitute a GST C-terminal domain. Positions 191 to 233 (NDDKLRRQKLKQQKADGVGPPLTKGKAKSKVHTQETSEGLDSS) are disordered. Positions 224–233 (QETSEGLDSS) are enriched in polar residues. S233 is modified (phosphoserine).

The protein belongs to the GSTCD family. As to expression, widely expressed in cell types relevant to airway function, including airway smooth muscle cells and epithelial cells.

Its subcellular location is the cytoplasm. The protein is Glutathione S-transferase C-terminal domain-containing protein (GSTCD) of Homo sapiens (Human).